Reading from the N-terminus, the 226-residue chain is NifU-like protein 1, chloroplastic (226 aa).

The N-terminal 76 residues, 1–76, are a transit peptide targeting the chloroplast; it reads MQTTTVPMAA…PVTAVQLPLT (76 aa).

Belongs to the NifU family. In terms of assembly, homodimer; disulfide-linked.

It is found in the plastid. It localises to the chloroplast stroma. Molecular scaffold for [Fe-S] cluster assembly of chloroplastic iron-sulfur proteins. The chain is NifU-like protein 1, chloroplastic (NIFU1) from Oryza sativa subsp. japonica (Rice).